The chain runs to 187 residues: Elongation factor P (187 aa).

It belongs to the elongation factor P family.

The protein localises to the cytoplasm. It participates in protein biosynthesis; polypeptide chain elongation. Its function is as follows. Involved in peptide bond synthesis. Stimulates efficient translation and peptide-bond synthesis on native or reconstituted 70S ribosomes in vitro. Probably functions indirectly by altering the affinity of the ribosome for aminoacyl-tRNA, thus increasing their reactivity as acceptors for peptidyl transferase. In Parafrankia sp. (strain EAN1pec), this protein is Elongation factor P.